A 209-amino-acid polypeptide reads, in one-letter code: GTP-binding protein RHO1 (209 aa).

N-acetylserine is present on Ser2. 17-24 is a binding site for GTP; it reads GDGACGKT. The short motif at 39–47 is the Effector region element; the sequence is YVPTVFENY. GTP-binding positions include 64 to 68 and 122 to 125; these read DTAGQ and CKVD. Positions 187–209 are disordered; that stretch reads KSKTNGKAKKNTTEKKKKKCVLL. Residues 190–209 show a composition bias toward basic residues; that stretch reads TNGKAKKNTTEKKKKKCVLL. Cys206 carries the cysteine methyl ester modification. Cys206 is lipidated: S-geranylgeranyl cysteine. The propeptide at 207 to 209 is removed in mature form; that stretch reads VLL.

Belongs to the small GTPase superfamily. Rho family. Interacts with BEM4; the interaction is direct. Interacts with SEC3; the interaction is direct. Interacts with the GAP BAG7. Interacts with the GAP LRG1. Interacts with the GAP SAC7. Interacts with the GAP RDI1. Interacts with the 1,3-beta-glucan synthase component FKS1. Interacts with the protein kinase PKC1. Interacts with the G protein beta subunit STE4. Interacts with SKN7. Interacts with TUS1. Interacts with BNI1.

The protein localises to the cell membrane. Its subcellular location is the endosome membrane. It is found in the peroxisome membrane. It catalyses the reaction GTP + H2O = GDP + phosphate + H(+). With respect to regulation, alternates between an inactive form bound to GDP and an active form bound to GTP. Activated by the guanine nucleotide-exchange factors (GEFs) ROM1, ROM2 and TUS1, and inactivated by GTPase-activating proteins (GAPs) BAG7, BEM2, LRG1, and SAC7, and the Rho GDP-dissociation inhibitor RDI1. The different GAPs regulate RHO1 in a target-specific manner. Its function is as follows. Acts as a central regulator in the cell wall integrity signaling pathway, which is regulated by the cell cycle and in response to various types of cell wall stress. Integrates signals from different cell surface sensors, and activates a set of effectors, regulating processes including beta-glucan synthesis at the site of wall remodeling, gene expression related to cell wall biogenesis, organization of the actin cytoskeleton, and protein- and secretory vesicle-targeting to the growth site. Activates the protein kinase C (PKC1) MAP kinase cascade, the beta-1,3-glucan synthase (FKS1), the formin BNI1, the exocyst component SEC3 and the transcription factor SKN7. The protein is GTP-binding protein RHO1 (RHO1) of Saccharomyces cerevisiae (strain ATCC 204508 / S288c) (Baker's yeast).